Consider the following 155-residue polypeptide: SsrA-binding protein (155 aa).

The protein belongs to the SmpB family.

The protein resides in the cytoplasm. In terms of biological role, required for rescue of stalled ribosomes mediated by trans-translation. Binds to transfer-messenger RNA (tmRNA), required for stable association of tmRNA with ribosomes. tmRNA and SmpB together mimic tRNA shape, replacing the anticodon stem-loop with SmpB. tmRNA is encoded by the ssrA gene; the 2 termini fold to resemble tRNA(Ala) and it encodes a 'tag peptide', a short internal open reading frame. During trans-translation Ala-aminoacylated tmRNA acts like a tRNA, entering the A-site of stalled ribosomes, displacing the stalled mRNA. The ribosome then switches to translate the ORF on the tmRNA; the nascent peptide is terminated with the 'tag peptide' encoded by the tmRNA and targeted for degradation. The ribosome is freed to recommence translation, which seems to be the essential function of trans-translation. The polypeptide is SsrA-binding protein (Geobacillus sp. (strain WCH70)).